Here is a 149-residue protein sequence, read N- to C-terminus: Calmodulin-1 (149 aa).

EF-hand domains are found at residues 8–43 (EQIS…LGQN), 44–79 (PTEA…KMKD), 81–116 (DSEE…LGEK), and 117–149 (LTDE…MMAK). The Ca(2+) site is built by Asp21, Asp23, Asp25, Cys27, Glu32, Asp57, Asp59, Asn61, Thr63, Glu68, Asp94, Asp96, Asn98, Glu105, Asp130, Asp132, Asp134, Gln136, and Glu141.

It belongs to the calmodulin family. Interacts with ZAR1 (via CaMBD domain). Binds to IQD1. Binds to MEE62 in a calcium-dependent manner.

It localises to the cytoplasm. The protein resides in the cell membrane. Calmodulin mediates the control of a large number of enzymes, ion channels and other proteins by Ca(2+). Among the enzymes to be stimulated by the calmodulin-Ca(2+) complex are a number of protein kinases and phosphatases. The protein is Calmodulin-1 (CAM1) of Arabidopsis thaliana (Mouse-ear cress).